The primary structure comprises 62 residues: Keratin-associated protein 19-5 (62 aa).

Residues 5–56 are 14 X 2 AA repeats of G-[YCGS]; sequence GSYYGGLGSGIRGFGNLGYGYGCGCGFGGYGYGSGYGRYGYGYPRPLYYGGY.

This sequence belongs to the KRTAP type 19 family. As to quaternary structure, interacts with hair keratins. Expressed in skin during two hair growth cycles. Expression restricted to the cortical cells of hair follicles, appearing first in the cortical cells processing the flat nuclei located a few cells above the dermal papilla.

Functionally, in the hair cortex, hair keratin intermediate filaments are embedded in an interfilamentous matrix, consisting of hair keratin-associated proteins (KRTAP), which are essential for the formation of a rigid and resistant hair shaft through their extensive disulfide bond cross-linking with abundant cysteine residues of hair keratins. The matrix proteins include the high-sulfur and high-glycine-tyrosine keratins. In Mus musculus (Mouse), this protein is Keratin-associated protein 19-5 (Krtap19-5).